The sequence spans 72 residues: Cytochrome b-c1 complex subunit 8 (72 aa).

Over 2-41 (GKQPVKLKAVVYAISPFQQKIMPGLWKDLPGKIHHKVSEN) the chain is Mitochondrial matrix. A helical transmembrane segment spans residues 42-59 (WISATLLLGPLVGTYSYV). Over 60–72 (QHFLEKEKLEHRY) the chain is Mitochondrial intermembrane.

It belongs to the UQCRQ/QCR8 family. In terms of assembly, component of the ubiquinol-cytochrome c oxidoreductase (cytochrome b-c1 complex, complex III, CIII), a multisubunit enzyme composed of 3 respiratory subunits cytochrome b, cytochrome c1 and Rieske protein, 2 core protein subunits, and additional low-molecular weight protein subunits. The complex exists as an obligatory dimer and forms supercomplexes (SCs) in the inner mitochondrial membrane with cytochrome c oxidase (complex IV, CIV).

The protein resides in the mitochondrion inner membrane. Component of the ubiquinol-cytochrome c oxidoreductase, a multisubunit transmembrane complex that is part of the mitochondrial electron transport chain which drives oxidative phosphorylation. The respiratory chain contains 3 multisubunit complexes succinate dehydrogenase (complex II, CII), ubiquinol-cytochrome c oxidoreductase (cytochrome b-c1 complex, complex III, CIII) and cytochrome c oxidase (complex IV, CIV), that cooperate to transfer electrons derived from NADH and succinate to molecular oxygen, creating an electrochemical gradient over the inner membrane that drives transmembrane transport and the ATP synthase. The cytochrome b-c1 complex catalyzes electron transfer from ubiquinol to cytochrome c, linking this redox reaction to translocation of protons across the mitochondrial inner membrane, with protons being carried across the membrane as hydrogens on the quinol. In the process called Q cycle, 2 protons are consumed from the matrix, 4 protons are released into the intermembrane space and 2 electrons are passed to cytochrome c. The sequence is that of Cytochrome b-c1 complex subunit 8 from Solanum tuberosum (Potato).